Consider the following 568-residue polypeptide: Urease subunit alpha (568 aa).

The Urease domain maps to 130–568 (GGIDTHIHFI…LPMAQRYFLF (439 aa)). Ni(2+)-binding residues include His135, His137, and Lys218. An N6-carboxylysine modification is found at Lys218. His220 is a substrate binding site. 2 residues coordinate Ni(2+): His247 and His273. His321 (proton donor) is an active-site residue. Asp361 contacts Ni(2+).

This sequence belongs to the metallo-dependent hydrolases superfamily. Urease alpha subunit family. Heterotrimer of UreA (gamma), UreB (beta) and UreC (alpha) subunits. Three heterotrimers associate to form the active enzyme. Requires Ni cation as cofactor. Post-translationally, carboxylation allows a single lysine to coordinate two nickel ions.

It is found in the cytoplasm. The catalysed reaction is urea + 2 H2O + H(+) = hydrogencarbonate + 2 NH4(+). Its pathway is nitrogen metabolism; urea degradation; CO(2) and NH(3) from urea (urease route): step 1/1. This is Urease subunit alpha from Burkholderia mallei (strain NCTC 10247).